Reading from the N-terminus, the 514-residue chain is MDVIKKKHWWQSDQLKWSVIGLLGLLVGYLVVLMYVQGEYLFAIMTLILSSAGLYIFANRKTYAWRYVYPGLAGMGLFVLFPLVCTIAIAFTNYSSTNQLTFERAQQVLMDRSYQAGKTYNFGLYPTGDEWQLALTDGETGKHYLSDAFSFGGEQKLQLKETDALPGGERANLRIITQNRLALNQITAVLPDESKVIMSSLRQFSGTRPLYTLADDGLLTNNQSGVKYRPNNDSGYYQSINADGSWGDEKLSPGYTVTIGAKNFTRVFTDEGIQKPFFAIFVWTVVFSVLTVVLTVAVGMVLACLVQWEALKGKAIYRVLLILPYAVPSFISILIFKGLFNQSFGEINMMLSALFGIKPAWFSDPNTARAMVIIVNTWLGYPYMMILCMGLLKAIPDDLYEASAMDGAGPFQNFFKITLPLLIKPLTPLMIASFAFNFNNFVLIQLLTNGGPDRLGTTTPAGYTDLLVSYTYRIAFEGGGGQDFGLAAAIATLIFLLVGALAIVNLKATRMKFD.

Over 1 to 16 (MDVIKKKHWWQSDQLK) the chain is Cytoplasmic. The helical transmembrane segment at 17 to 36 (WSVIGLLGLLVGYLVVLMYV) threads the bilayer. Over 37–39 (QGE) the chain is Periplasmic. Residues 40–57 (YLFAIMTLILSSAGLYIF) traverse the membrane as a helical segment. Topologically, residues 58–69 (ANRKTYAWRYVY) are cytoplasmic. Residues 70–92 (PGLAGMGLFVLFPLVCTIAIAFT) form a helical membrane-spanning segment. The Periplasmic portion of the chain corresponds to 93–283 (NYSSTNQLTF…QKPFFAIFVW (191 aa)). An ABC transmembrane type-1 domain is found at 281–505 (FVWTVVFSVL…LLVGALAIVN (225 aa)). The helical transmembrane segment at 284–306 (TVVFSVLTVVLTVAVGMVLACLV) threads the bilayer. Residues 307 to 318 (QWEALKGKAIYR) are Cytoplasmic-facing. The chain crosses the membrane as a helical span at residues 319–341 (VLLILPYAVPSFISILIFKGLFN). Topologically, residues 342-369 (QSFGEINMMLSALFGIKPAWFSDPNTAR) are periplasmic. A helical transmembrane segment spans residues 370–392 (AMVIIVNTWLGYPYMMILCMGLL). The Cytoplasmic segment spans residues 393-412 (KAIPDDLYEASAMDGAGPFQ). Residues 413–435 (NFFKITLPLLIKPLTPLMIASFA) form a helical membrane-spanning segment. Over 436 to 483 (FNFNNFVLIQLLTNGGPDRLGTTTPAGYTDLLVSYTYRIAFEGGGGQD) the chain is Periplasmic. A helical membrane pass occupies residues 484 to 506 (FGLAAAIATLIFLLVGALAIVNL). The Cytoplasmic portion of the chain corresponds to 507 to 514 (KATRMKFD).

The protein belongs to the binding-protein-dependent transport system permease family. MalFG subfamily. In terms of assembly, the complex is composed of two ATP-binding proteins (MalK), two transmembrane proteins (MalG and MalF) and a solute-binding protein (MalE).

The protein localises to the cell inner membrane. Its function is as follows. Part of the ABC transporter complex MalEFGK involved in maltose/maltodextrin import. Probably responsible for the translocation of the substrate across the membrane. This is Maltose/maltodextrin transport system permease protein MalF (malF) from Salmonella typhimurium (strain LT2 / SGSC1412 / ATCC 700720).